Here is an 87-residue protein sequence, read N- to C-terminus: MSDAHGVARDQLRAFIERIERLEEEKKTIADDIKDVYGEAKGMGFDTKILKKVVALRKKDEQERMEEEAILDTYLLALGMIESPPEG.

Belongs to the UPF0335 family.

The protein is UPF0335 protein RL4065 of Rhizobium johnstonii (strain DSM 114642 / LMG 32736 / 3841) (Rhizobium leguminosarum bv. viciae).